Reading from the N-terminus, the 20-residue chain is APDVHTRXTQNGLPPGXLPS.

Residues 1-20 form a disordered region; it reads APDVHTRXTQNGLPPGXLPS.

The polypeptide is Bulb protein (Narcissus pseudonarcissus (Daffodil)).